A 284-amino-acid polypeptide reads, in one-letter code: Bifunctional protein FolD 1 (284 aa).

Residues 164-166, serine 189, and isoleucine 230 contribute to the NADP(+) site; that span reads GRS.

The protein belongs to the tetrahydrofolate dehydrogenase/cyclohydrolase family. In terms of assembly, homodimer.

The catalysed reaction is (6R)-5,10-methylene-5,6,7,8-tetrahydrofolate + NADP(+) = (6R)-5,10-methenyltetrahydrofolate + NADPH. The enzyme catalyses (6R)-5,10-methenyltetrahydrofolate + H2O = (6R)-10-formyltetrahydrofolate + H(+). Its pathway is one-carbon metabolism; tetrahydrofolate interconversion. In terms of biological role, catalyzes the oxidation of 5,10-methylenetetrahydrofolate to 5,10-methenyltetrahydrofolate and then the hydrolysis of 5,10-methenyltetrahydrofolate to 10-formyltetrahydrofolate. The chain is Bifunctional protein FolD 1 from Rubrobacter xylanophilus (strain DSM 9941 / JCM 11954 / NBRC 16129 / PRD-1).